The chain runs to 81 residues: MNSTSTIIEFTGEFWTYFTLVFMMLTIGFFFIVTSLVAAILNKLCDLNDHHTNSLDIRTKLRSDTQLITRAHEESINQSSN.

Residues 1–19 (MNSTSTIIEFTGEFWTYFT) are Intravirion-facing. The chain crosses the membrane as a helical; Signal-anchor for type II membrane protein span at residues 20–40 (LVFMMLTIGFFFIVTSLVAAI). Over 41–81 (LNKLCDLNDHHTNSLDIRTKLRSDTQLITRAHEESINQSSN) the chain is Virion surface. Residue asparagine 77 is glycosylated (N-linked (GlcNAc...) asparagine; by host).

It belongs to the orthopneumovirus small hydrophobic protein family. Homopentamer forming a funnel-like pore. Interacts with glycoprotein G; this interaction occurs on the surface of virion particles and infected cells. Interacts with host BCAP31 (via C-terminus); this interaction is direct. Four species of SH have been detected in infected cell cytoplasm: a 7.5 kDa non-glycosylated form (SH0), a 13-15 kDa form that contains one or two N-linked carbohydrate side chains of the high-mannose type (SHg), a 21-30 kDa polylactosaminoglycan-modified form of the protein (SHp), and the isoform generated by alternative translational initiation. Of these different forms, SH0 is by far the most abundant protein detected during virus infection. Post-translationally, tyrosine phosphorylated.

The protein localises to the virion membrane. It localises to the host cell membrane. It is found in the host Golgi apparatus membrane. Its subcellular location is the host endoplasmic reticulum membrane. With respect to regulation, channel activity is inhibited by copper. Also inhibited by small-molecule pyronin B. In terms of biological role, viroporin that forms a homopentameric ion channel displaying low ion selectivity. May play a role in virus morphogenesis and pathogenicity at various stages of the viral life cycle. Accumulates at the membrane of the Golgi apparatus in infected cells and may facilitate virus release by modifying the secretory pathway. May enhance host membrane permeability and disrupt cellular ion homeostasis, which can be sensed as damage-associated molecular patterns/danger signals, triggering NLRP3 inflammasome activation and inflammatory immune response. Also inhibits host TNFA-mediated signaling pathway and may delay apoptosis, allowing time for the virus to replicate. In Bos taurus (Bovine), this protein is Small hydrophobic protein (SH).